Here is a 366-residue protein sequence, read N- to C-terminus: Lysophosphatidic acid receptor 1-B (366 aa).

Over 1–52 (MTSLSEFVSEPIGMMSQTSAASESQCYYNETIAFFYNRSGKYLDTEWNAVSK) the chain is Extracellular. Cystine bridges form between Cys-26/Cys-192 and Cys-190/Cys-197. N-linked (GlcNAc...) asparagine glycosylation is found at Asn-29 and Asn-37. Lys-41 lines the a 1-acyl-sn-glycero-3-phosphate pocket. Residues 53 to 77 (LVMGLGITVCIFIMLANLLVMVAIY) traverse the membrane as a helical segment. At 78–85 (VNRRFHFP) the chain is on the cytoplasmic side. A helical transmembrane segment spans residues 86 to 109 (IYYLMANLAAADFFAGLAYFYLMF). Residues 110-123 (NTGPNTRRLTVSTW) are Extracellular-facing. A helical membrane pass occupies residues 124-146 (LLRQGLIDTSLTASVANLLAIAI). Position 126-131 (126-131 (RQGLID)) interacts with a 1-acyl-sn-glycero-3-phosphate. The Cytoplasmic segment spans residues 147–165 (ERHITVFRMQLHTRMSNRR). Residues 166–186 (VVVVIVVIWTVAIVMGAIPSV) form a helical membrane-spanning segment. Topologically, residues 187-206 (GWNCICDLEHCSNMAPLYSD) are extracellular. The chain crosses the membrane as a helical span at residues 207 to 227 (SYLIFWTIFNLVTFVVMVVLY). Trp-212 is an a 1-acyl-sn-glycero-3-phosphate binding site. Residues 228–257 (AHIFVYVRQRTMRMSRHSSGPRRNRDTMMS) lie on the Cytoplasmic side of the membrane. Residues 258 to 282 (LLKTVVIVLGAFIVCWTPGLVLLLL) traverse the membrane as a helical segment. At 283–296 (DVCCPQCNILAYEK) the chain is on the extracellular side. Cys-286 and Cys-289 are joined by a disulfide. Residues 297–317 (FFLLLAEFNSAMNPIIYSYRD) traverse the membrane as a helical segment. The Cytoplasmic segment spans residues 318–366 (KEMSATFKQILCCQRTENVNGPTEGSDRSASSLNHTILAGVHSNDHSVV).

Belongs to the G-protein coupled receptor 1 family. Expressed at high levels in oocytes and at lower levels in brain and spinal cord. Below detection level in lung, heart, kidney, liver, muscle, stomach, and intestine.

It is found in the cell surface. It localises to the cell membrane. Its subcellular location is the endosome. Its function is as follows. Receptor for lysophosphatidic acid (LPA). Plays a role in the reorganization of the actin cytoskeleton, cell migration, differentiation and proliferation, and thereby contributes to the responses to tissue damage and infectious agents. Activates downstream signaling cascades via the G(i)/G(o), G(12)/G(13), and G(q) families of heteromeric G proteins. Signaling inhibits adenylyl cyclase activity and decreases cellular cAMP levels. Signaling triggers an increase of cytoplasmic Ca(2+) levels. Signaling leads to the activation of phospholipase C (PLC) and the formation of inositol 1,4,5-trisphosphate. Signaling mediates activation of down-stream MAP kinases. Contributes to the regulation of cell shape. Promotes Rho-dependent reorganization of the actin cytoskeleton in neuronal cells and neurite retraction. Promotes the activation of Rho and the formation of actin stress fibers. Promotes formation of lamellipodia at the leading edge of migrating cells via activation of Rac. Through its function as lysophosphatidic acid receptor, plays a role in chemotaxis and cell migration, including responses to injury and wounding. Promotes cell proliferation in response to lysophosphatidic acid. The polypeptide is Lysophosphatidic acid receptor 1-B (lpar1-b) (Xenopus laevis (African clawed frog)).